A 123-amino-acid chain; its full sequence is Putative EG45-like domain containing protein 1 (123 aa).

Positions 1–21 (MSKSIVFFSTVLVFLFSFSYA) are cleaved as a signal peptide. Positions 24-123 (GIATFYTSYT…AGIINIDYFP (100 aa)) constitute an Expansin-like EG45 domain.

The protein resides in the secreted. In terms of biological role, might have a systemic role in water and solute homeostasis. The sequence is that of Putative EG45-like domain containing protein 1 (EGC1) from Arabidopsis thaliana (Mouse-ear cress).